The following is a 250-amino-acid chain: Triosephosphate isomerase (250 aa).

Substrate is bound at residue 10-12; it reads NWK. Residue histidine 96 is the Electrophile of the active site. Residue glutamate 168 is the Proton acceptor of the active site. Residues glycine 174, serine 214, and 235–236 contribute to the substrate site; that span reads GG.

Belongs to the triosephosphate isomerase family. Homodimer.

It localises to the cytoplasm. It catalyses the reaction D-glyceraldehyde 3-phosphate = dihydroxyacetone phosphate. Its pathway is carbohydrate biosynthesis; gluconeogenesis. The protein operates within carbohydrate degradation; glycolysis; D-glyceraldehyde 3-phosphate from glycerone phosphate: step 1/1. In terms of biological role, involved in the gluconeogenesis. Catalyzes stereospecifically the conversion of dihydroxyacetone phosphate (DHAP) to D-glyceraldehyde-3-phosphate (G3P). The chain is Triosephosphate isomerase from Streptococcus suis (strain 98HAH33).